Consider the following 272-residue polypeptide: NAD kinase (272 aa).

The active-site Proton acceptor is D50. NAD(+) is bound by residues 50-51 (DG), 126-127 (NE), R152, D154, 165-170 (TAYNKS), and A189.

It belongs to the NAD kinase family. It depends on a divalent metal cation as a cofactor.

The protein resides in the cytoplasm. It carries out the reaction NAD(+) + ATP = ADP + NADP(+) + H(+). In terms of biological role, involved in the regulation of the intracellular balance of NAD and NADP, and is a key enzyme in the biosynthesis of NADP. Catalyzes specifically the phosphorylation on 2'-hydroxyl of the adenosine moiety of NAD to yield NADP. In Streptococcus pneumoniae (strain 70585), this protein is NAD kinase.